The primary structure comprises 104 residues: U20-lycotoxin-Ls1a (104 aa).

Positions 1–30 (MFSTSDQVSKMNSRILSALLILGIATCVIA) are cleaved as a signal peptide. Residues 31-76 (GGFCPKSRHPQCNLSYKINDCCAQSDCRVGSVCCVEGCGNVCRAES) form the WAP domain. Disulfide bonds link C34/C64, C42/C68, C51/C63, C52/C90, and C57/C72.

Belongs to the venom protein 11 family. 02 (wap-2) subfamily. Post-translationally, contains 5 disulfide bonds. In terms of tissue distribution, expressed by the venom gland.

It localises to the secreted. Has antibacterial activity. In Lycosa singoriensis (Wolf spider), this protein is U20-lycotoxin-Ls1a.